A 96-amino-acid chain; its full sequence is UPF0184 protein CG14818 (96 aa).

2 disordered regions span residues 1–28 and 70–96; these read MSPKNNHDPSSSGDSGNTNVQEADLQEM and IAEENDNAPESGDDNMDGQAGSEAAPK. Positions 8-21 are enriched in polar residues; that stretch reads DPSSSGDSGNTNVQ. Residues 21 to 77 are a coiled coil; the sequence is QEADLQEMEDVNNSLDALSCALDAVEQRTDDIMSQLRELLNSNREIRRLIAEENDNA. The segment covering 72-85 has biased composition (acidic residues); sequence EENDNAPESGDDNM.

Belongs to the UPF0184 (EST00098) family.

The chain is UPF0184 protein CG14818 from Drosophila melanogaster (Fruit fly).